The sequence spans 141 residues: Hemoglobin subunit alpha-1/2 (141 aa).

Residues 1–141 enclose the Globin domain; that stretch reads VLSPADKANV…VGTVLTSKYR (141 aa). Residue Ser3 is modified to Phosphoserine. N6-succinyllysine occurs at positions 7 and 11. Lys16 carries the N6-acetyllysine; alternate modification. N6-succinyllysine; alternate is present on Lys16. Tyr24 bears the Phosphotyrosine mark. Phosphoserine is present on Ser35. Lys40 is subject to N6-succinyllysine. A Phosphoserine modification is found at Ser49. His58 lines the O2 pocket. His87 provides a ligand contact to heme b. Ser102 carries the post-translational modification Phosphoserine. A Phosphothreonine modification is found at Thr108. Phosphoserine is present on residues Ser124 and Ser131. 2 positions are modified to phosphothreonine: Thr134 and Thr137. Position 138 is a phosphoserine (Ser138).

Belongs to the globin family. Heterotetramer of two alpha chains and two beta chains. Red blood cells.

Functionally, involved in oxygen transport from the lung to the various peripheral tissues. The protein is Hemoglobin subunit alpha-1/2 of Macroderma gigas (Australian ghost bat).